A 417-amino-acid polypeptide reads, in one-letter code: Serine hydroxymethyltransferase 2 (417 aa).

(6S)-5,6,7,8-tetrahydrofolate is bound by residues leucine 121 and 125–127 (GHL). Lysine 229 is subject to N6-(pyridoxal phosphate)lysine. 354–356 (SPF) contributes to the (6S)-5,6,7,8-tetrahydrofolate binding site.

Belongs to the SHMT family. Homodimer. The cofactor is pyridoxal 5'-phosphate.

Its subcellular location is the cytoplasm. The enzyme catalyses (6R)-5,10-methylene-5,6,7,8-tetrahydrofolate + glycine + H2O = (6S)-5,6,7,8-tetrahydrofolate + L-serine. Its pathway is one-carbon metabolism; tetrahydrofolate interconversion. It participates in amino-acid biosynthesis; glycine biosynthesis; glycine from L-serine: step 1/1. Functionally, catalyzes the reversible interconversion of serine and glycine with tetrahydrofolate (THF) serving as the one-carbon carrier. This reaction serves as the major source of one-carbon groups required for the biosynthesis of purines, thymidylate, methionine, and other important biomolecules. Also exhibits THF-independent aldolase activity toward beta-hydroxyamino acids, producing glycine and aldehydes, via a retro-aldol mechanism. This chain is Serine hydroxymethyltransferase 2, found in Pseudomonas putida (strain ATCC 47054 / DSM 6125 / CFBP 8728 / NCIMB 11950 / KT2440).